Consider the following 386-residue polypeptide: HORMA domain-containing protein 1 (386 aa).

An HORMA domain is found at 24-224; that stretch reads TQSLILVKRL…TPFHVLKVKV (201 aa). 2 disordered regions span residues 237 to 274 and 289 to 386; these read SIFK…KRDD and EDGN…TPLN. Residues 289 to 313 show a composition bias toward polar residues; sequence EDGNLQSDDSQNSALADSQEKTSQA. A compositionally biased stretch (basic and acidic residues) spans 329–343; the sequence is QKPDLELKNQKESAR.

The protein localises to the nucleus. It is found in the chromosome. Its function is as follows. Plays a key role in meiotic progression by ensuring that sufficient numbers of processed DNA double-strand breaks (DSBs) are available for successful homology search, promoting synaptonemal-complex formation independently and playing key role in the male mid-pachytene checkpoint and the female meiotic prophase checkpoint. The polypeptide is HORMA domain-containing protein 1 (hormad1) (Xenopus laevis (African clawed frog)).